A 2126-amino-acid chain; its full sequence is Serine/threonine-protein kinase WNK1 (2126 aa).

2 disordered regions span residues 1 to 80 (MSDG…FFRR) and 93 to 202 (LPGL…QQQD). S17 carries the phosphoserine modification. The segment covering 48 to 64 (RTEEYRRRRHTMDKDSR) has biased composition (basic and acidic residues). A Phosphothreonine modification is found at T58. Low complexity-rich tracts occupy residues 101–111 (PQPSVPAVVPQ) and 127–141 (VASQ…AASP). S165 and S172 each carry phosphoserine. The Protein kinase domain maps to 221–479 (LKFDIEIGRG…IKDLLNHAFF (259 aa)). S231 provides a ligand contact to ATP. 2 residues coordinate chloride: F283 and L299. ATP contacts are provided by residues 301–304 (TELM) and K351. The active-site Proton acceptor is the D368. The chloride site is built by L369 and L371. 2 positions are modified to phosphoserine; by autocatalysis: S378 and S382. The autoinhibitory domain stretch occupies residues 488 to 555 (ELAEEDDGEK…VCEGDHKTMA (68 aa)). Basic and acidic residues predominate over residues 573 to 588 (QLVREEQEKRKQEESS). The tract at residues 573–865 (QLVREEQEKR…SRHEKTSRPK (293 aa)) is disordered. Residues 593 to 614 (NEQQASVSQAGIQPLSVASTGI) are compositionally biased toward polar residues. The span at 615–626 (PTAPTTSASVST) shows a compositional bias: low complexity. Residues 629-639 (EPEEPEADQHQ) are interaction with KLHL3. Polar residues-rich tracts occupy residues 638–682 (HQQL…GSQH), 695–705 (TVSSIQAQSQP), and 713–733 (SMAQ…VLSS). The segment covering 734-746 (QPVQHPQQQGIQP) has biased composition (low complexity). The segment covering 750-789 (PQQAVQYSLPQAASSSEGTVQPVSQPQVSAGTQSSTQGVS) has biased composition (polar residues). The segment covering 793–823 (PPEQTPITQSQPTQPVPLVSSVDSAHSDVAS) has biased composition (low complexity). Over residues 826-836 (SDGNENAPSSS) the composition is skewed to polar residues. The segment covering 844–865 (TKRHYRKSVRSRSRHEKTSRPK) has biased composition (basic residues). The RFXV motif 1 signature appears at 1003 to 1006 (RFIV). S1007 is subject to Phosphoserine. Disordered stretches follow at residues 1474-1507 (GQVS…LTKT) and 1557-1595 (IPVT…ASSS). The span at 1477–1496 (STPGTHASAPASTATGAKPG) shows a compositional bias: low complexity. Over residues 1567 to 1583 (STMSSTAVTEAGSQPQK) the composition is skewed to polar residues. The RFXV motif 2 signature appears at 1604–1607 (RFQV). The tract at residues 1610-1695 (TMDDAQKERK…TKVGRFQVTT (86 aa)) is disordered. The segment covering 1613-1629 (DAQKERKNRSEDTKSVH) has biased composition (basic and acidic residues). Low complexity predominate over residues 1632–1650 (SSTSESSVLSSSSPESTLV). Short sequence motifs (RFXV motif) lie at residues 1690 to 1693 (RFQV) and 1702 to 1705 (RFSV). The span at 1709 to 1719 (EDKVTELKKEG) shows a compositional bias: basic and acidic residues. Disordered stretches follow at residues 1709-1783 (EDKV…LCSK), 1856-1940 (VIIP…NLYS), and 1952-1990 (SLSA…KGTF). S1723 carries the phosphoserine modification. The span at 1738 to 1747 (PKKEKPELAE) shows a compositional bias: basic and acidic residues. A phosphoserine mark is found at S1755, S1756, S1771, S1773, S1776, and S1865. Positions 1866 to 1878 (GRRRRPTKSKGSK) are enriched in basic residues. The span at 1879 to 1889 (SSRSSSLGNKS) shows a compositional bias: low complexity. The span at 1890-1940 (PQLSGNLSGQSGTSVLNPQQTLHPPGNTPETGHNQLLQPLKPSPSSDNLYS) shows a compositional bias: polar residues. A compositionally biased stretch (low complexity) spans 1957–1981 (GQGTSSTNTVGGTVSSQAAQAQPPA). The interval 1985–2005 (SRKGTFTDDLHKLVDNWARDA) is amphipathic alpha-helix. S2014 and S2030 each carry phosphoserine. Positions 2076 to 2097 (PFGTQWSGTGGPAPQPLGQFQP) are disordered. A phosphoserine mark is found at S2114 and S2116.

The protein belongs to the protein kinase superfamily. Ser/Thr protein kinase family. WNK subfamily. As to quaternary structure, interacts with WNK3. Interacts with WNK4; inhibiting the activity of WNK4. Interacts with SGK1; promoting its activation. Associates with the mTORC2 complex. Interacts with UVRAG. Interacts (via amphipathic alpha-helix region) with EMC2; promoting the ER membrane protein complex assembly. Interacts with isoform 1; inhibiting isoform 1 activity. Mg(2+) is required as a cofactor. Post-translationally, autophosphorylated at Ser-378 and Ser-382, promoting its activity. Autophosphorylation at Ser-382 is inhibited by intracellular calcium. Phosphorylation at Thr-58 increases ability to activate SGK1. Ubiquitinated by the BCR(KLHL3) complex, leading to its degradation. Also ubiquitinated by the BCR(KLHL2) complex. In terms of processing, may be O-glycosylated.

It is found in the cytoplasm. The protein localises to the nucleus. It localises to the cytoskeleton. Its subcellular location is the spindle. The catalysed reaction is L-seryl-[protein] + ATP = O-phospho-L-seryl-[protein] + ADP + H(+). It catalyses the reaction L-threonyl-[protein] + ATP = O-phospho-L-threonyl-[protein] + ADP + H(+). Its activity is regulated as follows. Activated in response to hyperosmotic stress: cell shrinkage promotes formation of a membraneless compartment that concentrates WNK1 with its substrates, OXSR1/OSR1 and STK39/SPAK. Activation requires autophosphorylation of Ser-382 and, to a lower extent, Ser-378. Autophosphorylation and subsequent activation is inhibited by increases in intracellular ionic strength: Cl(-) potently inhibits WNK1 kinase activity via direct binding. Also inhibited by K(+) ions. Inhibited by Compound 12 ((5-Chloro-2-(2-((methyl-d3)amino)thiazol-4-yl)- pyridin-4-yl)(4-(4-chlorobenzyl)piperazin-1-yl)methanone). Its function is as follows. Serine/threonine-protein kinase component of the WNK1-SPAK/OSR1 kinase cascade, which acts as a key regulator of blood pressure and regulatory volume increase by promoting ion influx. WNK1 mediates regulatory volume increase in response to hyperosmotic stress by acting as a molecular crowding sensor, which senses cell shrinkage and mediates formation of a membraneless compartment by undergoing liquid-liquid phase separation. The membraneless compartment concentrates WNK1 with its substrates, OXSR1/OSR1 and STK39/SPAK, promoting WNK1-dependent phosphorylation and activation of downstream kinases OXSR1/OSR1 and STK39/SPAK. Following activation, OXSR1/OSR1 and STK39/SPAK catalyze phosphorylation of ion cotransporters SLC12A1/NKCC2, SLC12A2/NKCC1, SLC12A5/KCC2 and SLC12A6/KCC3, regulating their activity. Phosphorylation of Na-K-Cl cotransporters SLC12A2/NKCC1 and SLC12A2/NKCC1 promote their activation and ion influx; simultaneously, phosphorylation of K-Cl cotransporters SLC12A5/KCC2 and SLC12A6/KCC3 inhibit their activity, blocking ion efflux. Also acts as a regulator of angiogenesis in endothelial cells. Also acts independently of the WNK1-SPAK/OSR1 kinase cascade by catalyzing phosphorylation of other substrates, such as SYT2, PCF11 and NEDD4L. Mediates phosphorylation of SYT2, regulating SYT2 association with phospholipids and membrane-binding. Regulates mRNA export in the nucleus by mediating phosphorylation of PCF11, thereby decreasing the association between PCF11 and POLR2A/RNA polymerase II and promoting mRNA export to the cytoplasm. Acts as a negative regulator of autophagy. Required for the abscission step during mitosis, independently of the WNK1-SPAK/OSR1 kinase cascade. WNK1 may also play a role in actin cytoskeletal reorganization. Also acts as a scaffold protein independently of its protein kinase activity: negatively regulates cell membrane localization of various transporters and channels, such as SLC4A4, SLC26A6, SLC26A9, TRPV4 and CFTR. Involved in the regulation of epithelial Na(+) channel (ENaC) by promoting activation of SGK1 in a kinase-independent manner. Probably activates SGK1 by acting as a scaffold protein that promotes the recruitment of SGK1 to the mTORC2 complex in response to chloride, leading to mTORC2-dependent phosphorylation and activation of SGK1. Acts as an assembly factor for the ER membrane protein complex independently of its protein kinase activity: associates with EMC2 in the cytoplasm via its amphipathic alpha-helix, and prevents EMC2 ubiquitination and subsequent degradation, thereby promoting EMC2 stabilization. Functionally, kinase-defective isoform specifically expressed in kidney, which acts as a dominant-negative regulator of the longer isoform 1. Does not directly inhibit WNK4 and has no direct effect on sodium and chloride ion transport. Down-regulates sodium-chloride cotransporter activity indirectly by inhibiting isoform 1, it associates with isoform 1 and attenuates its kinase activity. In kidney, may play an important role regulating sodium and potassium balance. Kinase-defective isoform produced by alternative promoter usage and alternative splicing. This chain is Serine/threonine-protein kinase WNK1, found in Rattus norvegicus (Rat).